Consider the following 608-residue polypeptide: 2',5'-phosphodiesterase 12 (608 aa).

A mitochondrion-targeting transit peptide spans 1 to 16; it reads MWRLPGRSALRGVRSV. Residues 90-99 are compositionally biased toward basic residues; it reads AAKKSRKNRA. Residues 90–111 form a disordered region; sequence AAKKSRKNRAHSSGGAACEATG. Serine 216 bears the Phosphoserine mark. Residues glutamate 350, aspartate 495, and asparagine 497 each coordinate Mg(2+). Residue aspartate 495 is the Proton donor/acceptor of the active site.

It belongs to the CCR4/nocturin family. It depends on Mg(2+) as a cofactor.

The protein resides in the mitochondrion matrix. It carries out the reaction Exonucleolytic cleavage of poly(A) to 5'-AMP.. Functionally, enzyme that cleaves 2',5'-phosphodiester bond linking adenosines of the 5'-triphosphorylated oligoadenylates, triphosphorylated oligoadenylates referred as 2-5A modulates the 2-5A system. Degrades triphosphorylated 2-5A to produce AMP and ATP. Also cleaves 3',5'-phosphodiester bond of oligoadenylates. Plays a role as a negative regulator of the 2-5A system that is one of the major pathways for antiviral and antitumor functions induced by interferons (IFNs). Suppression of this enzyme increases cellular 2-5A levels and decreases viral replication in cultured small-airway epithelial cells. The polypeptide is 2',5'-phosphodiesterase 12 (Pde12) (Mus musculus (Mouse)).